A 247-amino-acid chain; its full sequence is PsbP domain-containing protein 3, chloroplastic (247 aa).

The N-terminal 26 residues, 1-26 (MAAISPWLSSPQSFSNPRVTITDSRR), are a transit peptide targeting the chloroplast. A thylakoid-targeting transit peptide spans 27–80 (CSSISAAISVLDSSNEEQHRISSRDHVGMKRRDVMLQIASSVFFLPLAISPAFA).

This sequence belongs to the PsbP family.

It is found in the plastid. The protein resides in the chloroplast thylakoid lumen. This Arabidopsis thaliana (Mouse-ear cress) protein is PsbP domain-containing protein 3, chloroplastic (PPD3).